A 283-amino-acid polypeptide reads, in one-letter code: Acetylglutamate kinase (283 aa).

Residues 63-64, Arg-85, and Asn-178 each bind substrate; that span reads GG.

The protein belongs to the acetylglutamate kinase family. ArgB subfamily.

The protein localises to the cytoplasm. It catalyses the reaction N-acetyl-L-glutamate + ATP = N-acetyl-L-glutamyl 5-phosphate + ADP. It functions in the pathway amino-acid biosynthesis; L-arginine biosynthesis; N(2)-acetyl-L-ornithine from L-glutamate: step 2/4. Functionally, catalyzes the ATP-dependent phosphorylation of N-acetyl-L-glutamate. This Prochlorococcus marinus (strain MIT 9312) protein is Acetylglutamate kinase.